We begin with the raw amino-acid sequence, 362 residues long: MDTGVIEGGLNVTLTIRLLMHGKEVGSIIGKKGESVKKMREESGARINISEGNCPERIITLAGPTNAIFKAFAMIIDKLEEDISSSMTNSTAASRPPVTLRLVVPASQCGSLIGKGGCKIKEIRESTGAQVQVAGDMLPNSTERAITIAGIPQSIIECVKQICVVMLESPPKGVTIPYRPKPSSSPVIFAGGQDRYSTGSDSASFPHTTPSMCLNPDLEGPPLEAYTIQGQYAIPQPDLTKLHQLAMQQSHFPMTHGNTGFSGIESSSPEVKGYWAGLDASAQTTSHELTIPNDLIGCIIGRQGAKINEIRQMSGAQIKIANPVEGSTDRQVTITGSAASISLAQYLINVRLSSETGGMGSS.

KH domains follow at residues 13–75 (TLTI…FAMI) and 97–162 (PVTL…VKQI). A Glycyl lysine isopeptide (Lys-Gly) (interchain with G-Cter in SUMO2) cross-link involves residue lysine 115. Residue serine 169 is modified to Phosphoserine. A Glycyl lysine isopeptide (Lys-Gly) (interchain with G-Cter in SUMO2) cross-link involves residue lysine 181. 2 positions are modified to phosphoserine: serine 185 and serine 268. Residues 284-348 (TTSHELTIPN…ASISLAQYLI (65 aa)) form the KH 3 domain. A Glycyl lysine isopeptide (Lys-Gly) (interchain with G-Cter in SUMO2) cross-link involves residue lysine 319. Serine 361 and serine 362 each carry phosphoserine.

Identified in a mRNP complex, at least composed of DHX9, DDX3X, ELAVL1, HNRNPU, IGF2BP1, ILF3, PABPC1, PCBP2, PTBP2, STAU1, STAU2, SYNCRIP and YBX1. Interacts with IFIH1 and RNF135. Interacts with MAVS (via C-terminus) and ITCH (via WW domains). Interacts with CGAS; preventing the formation of liquid-like droplets in which CGAS is activated. Post-translationally, phosphorylated. The non-phosphorylated form(s) exhibited the strongest poly(rC)-binding activity.

It localises to the nucleus. The protein resides in the cytoplasm. In terms of biological role, single-stranded nucleic acid binding protein that binds preferentially to oligo dC. Major cellular poly(rC)-binding protein. Also binds poly(rU). Acts as a negative regulator of antiviral signaling. Negatively regulates cellular antiviral responses mediated by MAVS signaling. It acts as an adapter between MAVS and the E3 ubiquitin ligase ITCH, therefore triggering MAVS ubiquitination and degradation. Negativeley regulates the cGAS-STING pathway via interaction with CGAS, preventing the formation of liquid-like droplets in which CGAS is activated. Together with PCBP1, required for erythropoiesis, possibly by regulating mRNA splicing. In Mus musculus (Mouse), this protein is Poly(rC)-binding protein 2 (Pcbp2).